Consider the following 216-residue polypeptide: Probable transaldolase (216 aa).

Lys83 serves as the catalytic Schiff-base intermediate with substrate.

This sequence belongs to the transaldolase family. Type 3B subfamily.

Its subcellular location is the cytoplasm. The enzyme catalyses D-sedoheptulose 7-phosphate + D-glyceraldehyde 3-phosphate = D-erythrose 4-phosphate + beta-D-fructose 6-phosphate. It participates in carbohydrate degradation; pentose phosphate pathway; D-glyceraldehyde 3-phosphate and beta-D-fructose 6-phosphate from D-ribose 5-phosphate and D-xylulose 5-phosphate (non-oxidative stage): step 2/3. Transaldolase is important for the balance of metabolites in the pentose-phosphate pathway. The protein is Probable transaldolase of Sphingopyxis alaskensis (strain DSM 13593 / LMG 18877 / RB2256) (Sphingomonas alaskensis).